The chain runs to 429 residues: CinA-like protein (429 aa).

It belongs to the CinA family.

The polypeptide is CinA-like protein (Prochlorococcus marinus (strain MIT 9313)).